The sequence spans 29 residues: Cytochrome b6-f complex subunit 8 (29 aa).

Residues 3–23 (IVGIAWAALMVVFTFSLSLVV) form a helical membrane-spanning segment.

This sequence belongs to the PetN family. The 4 large subunits of the cytochrome b6-f complex are cytochrome b6, subunit IV (17 kDa polypeptide, PetD), cytochrome f and the Rieske protein, while the 4 small subunits are PetG, PetL, PetM and PetN. The complex functions as a dimer.

It localises to the plastid. It is found in the chloroplast thylakoid membrane. In terms of biological role, component of the cytochrome b6-f complex, which mediates electron transfer between photosystem II (PSII) and photosystem I (PSI), cyclic electron flow around PSI, and state transitions. This chain is Cytochrome b6-f complex subunit 8, found in Cryptomeria japonica (Japanese cedar).